The chain runs to 235 residues: Serine protease SplA (235 aa).

An N-terminal signal peptide occupies residues 1 to 35 (MNKNVMVKGLTALTILTSLGFAENISNQPHSIAKA). Residues His-74, Asp-113, and Ser-189 each act as charge relay system in the active site.

This sequence belongs to the peptidase S1B family.

Its subcellular location is the secreted. This is Serine protease SplA (splA) from Staphylococcus aureus (strain USA300).